The chain runs to 205 residues: Recombination protein RecR (205 aa).

The C4-type zinc finger occupies 59–74 (CSVCFHLSAEPVCEVC). In terms of domain architecture, Toprim spans 82-181 (GTLCVVADSR…KVTRIAFGLP (100 aa)).

It belongs to the RecR family.

Its function is as follows. May play a role in DNA repair. It seems to be involved in an RecBC-independent recombinational process of DNA repair. It may act with RecF and RecO. The polypeptide is Recombination protein RecR (Cyanothece sp. (strain PCC 7425 / ATCC 29141)).